A 461-amino-acid chain; its full sequence is uncharacterized protein (461 aa).

Basic and acidic residues predominate over residues 1–19 (MEKCSHESGRHSAENDGKY). The disordered stretch occupies residues 1-21 (MEKCSHESGRHSAENDGKYDI).

The protein belongs to the CapA family.

Could be involved in the biosynthesis of a cell wall component. This is an uncharacterized protein from Sinorhizobium fredii (strain NBRC 101917 / NGR234).